Reading from the N-terminus, the 233-residue chain is ATP synthase subunit a, chloroplastic (233 aa).

4 helical membrane-spanning segments follow: residues 27-47 (VLLI…LGTL), 84-104 (VPFV…GALI), 122-142 (DINT…YAGF), and 192-212 (VLCL…GIFA).

The protein belongs to the ATPase A chain family. In terms of assembly, F-type ATPases have 2 components, CF(1) - the catalytic core - and CF(0) - the membrane proton channel. CF(1) has five subunits: alpha(3), beta(3), gamma(1), delta(1), epsilon(1). CF(0) has four main subunits: a, b, b' and c.

The protein resides in the plastid. The protein localises to the chloroplast thylakoid membrane. Functionally, key component of the proton channel; it plays a direct role in the translocation of protons across the membrane. In Ochrosphaera neapolitana, this protein is ATP synthase subunit a, chloroplastic.